The chain runs to 63 residues: Large ribosomal subunit protein uL29 (63 aa).

This sequence belongs to the universal ribosomal protein uL29 family.

This Tolumonas auensis (strain DSM 9187 / NBRC 110442 / TA 4) protein is Large ribosomal subunit protein uL29.